The chain runs to 318 residues: MFTINLLLLITPALIAMAFLTLMERKILGYMQLRKGPNTVGPYGVLQPIADAMKLFTKEPLLPSVSTTTLYMAAPTLALTIALLLWTPLPMPYSLINFNLGLLFVLATSSLAVYSILWSGWASNSNYALIGALRAVAQTISYGVTLAIILLSTLLMSGSFNLHSLITTQEQSWLLLPSWPLTMMWFISTLAETNRAPFDLTEGESELISGFNIEYAAGSFALFFMAEYMNIIMMNALTTTIFTATPYNMLTTELYTMNFMTKTLLLTILFLWIRTAYPRFRYDQLMYLLWKKFLPLTLALCMWYISMPMLLSGIPPQT.

Transmembrane regions (helical) follow at residues 2 to 22 (FTIN…FLTL), 70 to 90 (LYMA…TPLP), 98 to 118 (FNLG…SILW), 140 to 160 (ISYG…SGSF), 173 to 193 (WLLL…LAET), 217 to 237 (AGSF…MNAL), 253 to 273 (ELYT…FLWI), and 294 to 314 (LPLT…LSGI).

It belongs to the complex I subunit 1 family.

Its subcellular location is the mitochondrion inner membrane. It catalyses the reaction a ubiquinone + NADH + 5 H(+)(in) = a ubiquinol + NAD(+) + 4 H(+)(out). Functionally, core subunit of the mitochondrial membrane respiratory chain NADH dehydrogenase (Complex I) that is believed to belong to the minimal assembly required for catalysis. Complex I functions in the transfer of electrons from NADH to the respiratory chain. The immediate electron acceptor for the enzyme is believed to be ubiquinone. The protein is NADH-ubiquinone oxidoreductase chain 1 (MT-ND1) of Sapajus apella (Brown-capped capuchin).